Reading from the N-terminus, the 318-residue chain is tRNA U34 carboxymethyltransferase (318 aa).

Carboxy-S-adenosyl-L-methionine-binding residues include Lys88, Trp102, Lys107, Gly126, Met192, Tyr196, and Arg311.

This sequence belongs to the class I-like SAM-binding methyltransferase superfamily. CmoB family. As to quaternary structure, homotetramer.

The catalysed reaction is carboxy-S-adenosyl-L-methionine + 5-hydroxyuridine(34) in tRNA = 5-carboxymethoxyuridine(34) in tRNA + S-adenosyl-L-homocysteine + H(+). In terms of biological role, catalyzes carboxymethyl transfer from carboxy-S-adenosyl-L-methionine (Cx-SAM) to 5-hydroxyuridine (ho5U) to form 5-carboxymethoxyuridine (cmo5U) at position 34 in tRNAs. This Pseudomonas fluorescens (strain ATCC BAA-477 / NRRL B-23932 / Pf-5) protein is tRNA U34 carboxymethyltransferase.